The chain runs to 120 residues: Ribosome-binding factor A (120 aa).

This sequence belongs to the RbfA family. As to quaternary structure, monomer. Binds 30S ribosomal subunits, but not 50S ribosomal subunits or 70S ribosomes.

Its subcellular location is the cytoplasm. One of several proteins that assist in the late maturation steps of the functional core of the 30S ribosomal subunit. Associates with free 30S ribosomal subunits (but not with 30S subunits that are part of 70S ribosomes or polysomes). Required for efficient processing of 16S rRNA. May interact with the 5'-terminal helix region of 16S rRNA. This chain is Ribosome-binding factor A, found in Chlorobaculum parvum (strain DSM 263 / NCIMB 8327) (Chlorobium vibrioforme subsp. thiosulfatophilum).